A 75-amino-acid chain; its full sequence is Large ribosomal subunit protein bL31 (75 aa).

Zn(2+)-binding residues include Cys16, Cys18, Cys38, and Cys41.

Belongs to the bacterial ribosomal protein bL31 family. Type A subfamily. In terms of assembly, part of the 50S ribosomal subunit. Zn(2+) is required as a cofactor.

Its function is as follows. Binds the 23S rRNA. The chain is Large ribosomal subunit protein bL31 from Nocardioides sp. (strain ATCC BAA-499 / JS614).